The chain runs to 188 residues: D-glycero-beta-D-manno-heptose-1,7-bisphosphate 7-phosphatase (188 aa).

Residues C92, H94, C107, and C109 each coordinate Zn(2+).

The protein belongs to the GmhB family.

The protein localises to the cytoplasm. It carries out the reaction D-glycero-beta-D-manno-heptose 1,7-bisphosphate + H2O = D-glycero-beta-D-manno-heptose 1-phosphate + phosphate. The protein operates within nucleotide-sugar biosynthesis; ADP-L-glycero-beta-D-manno-heptose biosynthesis; ADP-L-glycero-beta-D-manno-heptose from D-glycero-beta-D-manno-heptose 7-phosphate: step 2/4. It functions in the pathway bacterial outer membrane biogenesis; LPS core biosynthesis. In terms of biological role, converts the D-glycero-beta-D-manno-heptose 1,7-bisphosphate intermediate into D-glycero-beta-D-manno-heptose 1-phosphate by removing the phosphate group at the C-7 position. This is D-glycero-beta-D-manno-heptose-1,7-bisphosphate 7-phosphatase (gmhB1) from Photorhabdus laumondii subsp. laumondii (strain DSM 15139 / CIP 105565 / TT01) (Photorhabdus luminescens subsp. laumondii).